A 1054-amino-acid polypeptide reads, in one-letter code: RIRYKGIVCDRCGVEVTSAKVRRERMGHIELAAPVSHIWYFKGIPSRMGLVLDMSPRSLEEIIYFASYVVTKGGDTPLTEKQLLSEREYRELKAEYGNAFEAGMGAEAVQTLLANVDLEEEVTELKAELREATGQKRVRAVRRLDIIEAFVKSGNKPEWMVMDVIPIIPPDLRPMVQLEGGRFATSDLNDLYRRVINRNNRLKRLLELNAPGIIVQNEKRMLQEAADALVDNGRRGRPVTGPGNRPLKSLSHMLKGKQGRFRQNLLGKRVDYSGRSVIDVGPFLKMNQMGLPRQMAMELFRPFIMKELVKRDLAGNIRAAKRKIDRRDDDVMDVLEDVIKEHPVLLNRAPTLHRLGIQAFEPVLVSGKAMRLHPLVTEAYNADFDGDQMAIHVPLSDEAQAEARLLMLAAGHILAPKDGKPIVAPSQDMVIGNYYLTTEEAGREGEGMIFKDVNEVRTAYQNKYVHLHTRIGIQTSSLPAAKPFTAEQRSRIMLTSVGKLFFNDILPEDFPFLNEPTEANLHEIDNRFFLEPGEDIKAHYAETPILPPFKKGYLSDIIAEVYKIYKVTETSLLLDRMKDLGYDESTKSGLTVGVSDVTDLKEKPEIIADAHKQVATVTKQFRRGLITDSERYERVIAIWNKAKDDITEKLIEHFEPDNNIFMMSDSGARGNISNFTQLAGMRGLMAAPNGRIMELPIIANFREGLSVLEMFFSTHGARKGMTDTALKTADSGYMTRRLVDVAQDVIIRELDCHSDRGLDVTAIMNGNEVIEPLYERILGRYAQKSVFDPETGETLVNHNEMITEDIAKRIIEAGITTVTIRSAFTCNTEHGVCVRCYGRNMATGDVVEVGEAVGTVAAQSIGEPGTQLTMRTFHTGGVAGNDITQGLPRVQEIFEARNPKGRAMITEVTGEVTSIEENPADRTKEVTIQGETDTRTYTLPMTARMRVGEGDRIHRGETLNEGSADPKEIIQVRDTLATENYIVHEVQKVYRMQGVEISDKHIEVMARQMLRKVRVMDPGETDLLPGTLMDIAQFRDANEDTLLKGGLPATGRPV.

Mg(2+)-binding residues include D383, D385, and D387. Zn(2+) contacts are provided by C752, C826, C833, and C836.

Belongs to the RNA polymerase beta' chain family. In terms of assembly, the RNAP catalytic core consists of 2 alpha, 1 beta, 1 beta' and 1 omega subunit. When a sigma factor is associated with the core the holoenzyme is formed, which can initiate transcription. The cofactor is Mg(2+). Zn(2+) is required as a cofactor.

It carries out the reaction RNA(n) + a ribonucleoside 5'-triphosphate = RNA(n+1) + diphosphate. DNA-dependent RNA polymerase catalyzes the transcription of DNA into RNA using the four ribonucleoside triphosphates as substrates. This is DNA-directed RNA polymerase subunit beta' from Weissella paramesenteroides (Leuconostoc paramesenteroides).